The following is a 268-amino-acid chain: WUSCHEL-related homeobox 12 (268 aa).

Polar residues predominate over residues 1–16 (MNQEGASHSPSSTSTE). Disordered stretches follow at residues 1–22 (MNQE…RARW) and 173–198 (SDHN…QNSN). Positions 17–81 (PVRARWSPKP…NRRSRSRRRH (65 aa)) form a DNA-binding region, homeobox; WUS-type.

It belongs to the WUS homeobox family.

It localises to the nucleus. In terms of biological role, transcription factor which may be involved in developmental processes. This is WUSCHEL-related homeobox 12 (WOX12) from Arabidopsis thaliana (Mouse-ear cress).